Consider the following 421-residue polypeptide: UDP-N-acetylglucosamine 1-carboxyvinyltransferase (421 aa).

24 to 25 (KN) provides a ligand contact to phosphoenolpyruvate. R93 serves as a coordination point for UDP-N-acetyl-alpha-D-glucosamine. The Proton donor role is filled by C117. C117 is subject to 2-(S-cysteinyl)pyruvic acid O-phosphothioketal. Positions 307 and 329 each coordinate UDP-N-acetyl-alpha-D-glucosamine.

It belongs to the EPSP synthase family. MurA subfamily.

It localises to the cytoplasm. The enzyme catalyses phosphoenolpyruvate + UDP-N-acetyl-alpha-D-glucosamine = UDP-N-acetyl-3-O-(1-carboxyvinyl)-alpha-D-glucosamine + phosphate. The protein operates within cell wall biogenesis; peptidoglycan biosynthesis. Its function is as follows. Cell wall formation. Adds enolpyruvyl to UDP-N-acetylglucosamine. The polypeptide is UDP-N-acetylglucosamine 1-carboxyvinyltransferase (Blochmanniella pennsylvanica (strain BPEN)).